Here is a 288-residue protein sequence, read N- to C-terminus: MMIRLRRAIDSAVTQLEEAGIGSARCDAEQLAAHLAGTDRGRLALLDTPGEEFFRRYSDAVAARSRRVPLQHLIGTVSFGPVVLHVGPDVFIPRPETEAILAWVMAQRLPERPVIVDACTGSGALAVALAHHRPAARVIGIDDSDSALDYARRNAEGTAVECVRADVTTPALLPELDGCVDLFVANPPYVPDDPVVQSILEPEVTQYDPRHAVFGGPDGMALTADIVGLAGRWLRPGGLFAVEHDDSTSVPTLDLVYRTDLFDDVLTHRDLAGRPRFVTARRRESWSA.

S-adenosyl-L-methionine-binding residues include Asp-142 and Asn-186. Asn-186–Tyr-189 contributes to the substrate binding site.

It belongs to the protein N5-glutamine methyltransferase family. PrmC subfamily.

The enzyme catalyses L-glutaminyl-[peptide chain release factor] + S-adenosyl-L-methionine = N(5)-methyl-L-glutaminyl-[peptide chain release factor] + S-adenosyl-L-homocysteine + H(+). Its function is as follows. Methylates the class 1 translation termination release factors RF1/PrfA and RF2/PrfB on the glutamine residue of the universally conserved GGQ motif. This Mycobacterium leprae (strain TN) protein is Release factor glutamine methyltransferase.